Consider the following 577-residue polypeptide: Arginine--tRNA ligase (577 aa).

The short motif at 122–132 (PNVAKEMHVGH) is the 'HIGH' region element.

Belongs to the class-I aminoacyl-tRNA synthetase family. As to quaternary structure, monomer.

It is found in the cytoplasm. It catalyses the reaction tRNA(Arg) + L-arginine + ATP = L-arginyl-tRNA(Arg) + AMP + diphosphate. The chain is Arginine--tRNA ligase from Aliivibrio fischeri (strain ATCC 700601 / ES114) (Vibrio fischeri).